Here is a 234-residue protein sequence, read N- to C-terminus: Ribose-5-phosphate isomerase A (234 aa).

Residues 34–37 (TGST), 90–93 (DGAD), and 103–106 (KGGG) contribute to the substrate site. The active-site Proton acceptor is Glu112. Lys130 contacts substrate.

This sequence belongs to the ribose 5-phosphate isomerase family. In terms of assembly, homodimer.

The enzyme catalyses aldehydo-D-ribose 5-phosphate = D-ribulose 5-phosphate. Its pathway is carbohydrate degradation; pentose phosphate pathway; D-ribose 5-phosphate from D-ribulose 5-phosphate (non-oxidative stage): step 1/1. Catalyzes the reversible conversion of ribose-5-phosphate to ribulose 5-phosphate. In Methanosarcina acetivorans (strain ATCC 35395 / DSM 2834 / JCM 12185 / C2A), this protein is Ribose-5-phosphate isomerase A.